The sequence spans 109 residues: SIAFSKAVFSEFLATLLFVFFGLGSALNWPQALPSGLQIAMAFGLAIGTLVQTLGHISGAHINPAVTVACLVGCHVSFLRAIFYVAAQLLGAVAGAALLHELTPPDIRG.

At 1–6 (SIAFSK) the chain is on the cytoplasmic side. The chain crosses the membrane as a helical span at residues 7–27 (AVFSEFLATLLFVFFGLGSAL). Topologically, residues 28–35 (NWPQALPS) are extracellular. Residues 36-54 (GLQIAMAFGLAIGTLVQTL) traverse the membrane as a helical segment. Topologically, residues 55 to 59 (GHISG) are cytoplasmic. An intramembrane region (discontinuously helical) is located at residues 60–69 (AHINPAVTVA). Residues 63–65 (NPA) carry the NPA 1 motif. The Cytoplasmic segment spans residues 70–80 (CLVGCHVSFLR). Residues 81 to 102 (AIFYVAAQLLGAVAGAALLHEL) form a helical membrane-spanning segment. Over 103–109 (TPPDIRG) the chain is Extracellular.

It belongs to the MIP/aquaporin (TC 1.A.8) family. Homotetramer. Serine phosphorylation is necessary and sufficient for expression at the apical membrane. Endocytosis is not phosphorylation-dependent. Post-translationally, N-glycosylated.

The protein resides in the apical cell membrane. The protein localises to the basolateral cell membrane. It is found in the cell membrane. It localises to the cytoplasmic vesicle membrane. Its subcellular location is the golgi apparatus. The protein resides in the trans-Golgi network membrane. It catalyses the reaction H2O(in) = H2O(out). The enzyme catalyses glycerol(in) = glycerol(out). Forms a water-specific channel that provides the plasma membranes of renal collecting duct with high permeability to water, thereby permitting water to move in the direction of an osmotic gradient. Plays an essential role in renal water homeostasis. Could also be permeable to glycerol. This is Aquaporin-2 from Orycteropus afer (Aardvark).